Consider the following 247-residue polypeptide: Putative urease accessory protein UreD homolog (247 aa).

This sequence belongs to the UreD family. As to quaternary structure, ureD, UreF and UreG form a complex that acts as a GTP-hydrolysis-dependent molecular chaperone, activating the urease apoprotein by helping to assemble the nickel containing metallocenter of UreC. The UreE protein probably delivers the nickel.

The protein resides in the cytoplasm. Required for maturation of urease via the functional incorporation of the urease nickel metallocenter. The sequence is that of Putative urease accessory protein UreD homolog from Escherichia coli O157:H7.